The chain runs to 895 residues: Probable LRR receptor-like serine/threonine-protein kinase At5g48740 (895 aa).

Positions 1 to 16 are cleaved as a signal peptide; the sequence is MLFWVLLSSFCVFCFS. The Extracellular segment spans residues 17-544; the sequence is SPDGFLSLSC…INKKQRKQNR (528 aa). Residues asparagine 36, asparagine 50, asparagine 60, asparagine 140, asparagine 195, asparagine 234, and asparagine 318 are each glycosylated (N-linked (GlcNAc...) asparagine). 6 LRR repeats span residues 385-407, 408-430, 431-453, 454-477, 478-500, and 511-532; these read RVTSLFLSKINLRSISPTFGDLL, DLKTLDLHNTSLTGAIQNVGSLK, DLQKLNLSFNQLESFGSELEDLV, NLEVLDLQNNSLQGSVPETLGKLK, KLRLLNLENNNLVGPLPQSLNIT, and CLSFSSISCNNVSSTIDTPQVT. N-linked (GlcNAc...) asparagine glycans are attached at residues asparagine 416, asparagine 436, asparagine 462, asparagine 498, and asparagine 521. Residues 545-565 traverse the membrane as a helical segment; that stretch reads IAILLGVSGGALFATFLVFVF. The Cytoplasmic segment spans residues 566–895; it reads MSIFTRRQRN…SYLAASAHTD (330 aa). Positions 606 to 888 constitute a Protein kinase domain; the sequence is RNFKEVIGRG…EAYSLQLSYL (283 aa). Residues 612–620 and lysine 634 contribute to the ATP site; that span reads IGRGSFGAV. At tyrosine 679 the chain carries Phosphotyrosine. Aspartate 732 functions as the Proton acceptor in the catalytic mechanism. Residue serine 736 is modified to Phosphoserine. Residues threonine 767 and threonine 772 each carry the phosphothreonine modification. Position 780 is a phosphotyrosine (tyrosine 780).

The protein belongs to the protein kinase superfamily. Ser/Thr protein kinase family.

It is found in the membrane. The catalysed reaction is L-seryl-[protein] + ATP = O-phospho-L-seryl-[protein] + ADP + H(+). It catalyses the reaction L-threonyl-[protein] + ATP = O-phospho-L-threonyl-[protein] + ADP + H(+). The sequence is that of Probable LRR receptor-like serine/threonine-protein kinase At5g48740 from Arabidopsis thaliana (Mouse-ear cress).